Consider the following 526-residue polypeptide: Probable feruloyl esterase B-2 (526 aa).

The N-terminal stretch at 1–18 is a signal peptide; that stretch reads MTKLSLLPLLALASAVLA. 2 disulfides stabilise this stretch: cysteine 27–cysteine 74 and cysteine 62–cysteine 113. N-linked (GlcNAc...) asparagine glycosylation is found at asparagine 52, asparagine 97, and asparagine 137. Cystine bridges form between cysteine 186-cysteine 441, cysteine 255-cysteine 272, cysteine 281-cysteine 291, and cysteine 503-cysteine 525. Serine 187 serves as the catalytic Acyl-ester intermediate. N-linked (GlcNAc...) asparagine glycosylation is present at asparagine 233. Aspartate 256, aspartate 259, alanine 261, aspartate 263, and isoleucine 265 together coordinate Ca(2+). The N-linked (GlcNAc...) asparagine glycan is linked to asparagine 311. Catalysis depends on charge relay system residues aspartate 400 and histidine 440. Asparagine 516 carries N-linked (GlcNAc...) asparagine glycosylation.

Belongs to the tannase family.

The protein resides in the secreted. The enzyme catalyses feruloyl-polysaccharide + H2O = ferulate + polysaccharide.. In terms of biological role, involved in degradation of plant cell walls. Hydrolyzes the feruloyl-arabinose ester bond in arabinoxylans as well as the feruloyl-galactose and feruloyl-arabinose ester bonds in pectin. The protein is Probable feruloyl esterase B-2 (faeB-2) of Neosartorya fischeri (strain ATCC 1020 / DSM 3700 / CBS 544.65 / FGSC A1164 / JCM 1740 / NRRL 181 / WB 181) (Aspergillus fischerianus).